The primary structure comprises 117 residues: Putative phosphotransferase enzyme IIB component MG129 (117 aa).

Residues 1-21 form a helical membrane-spanning segment; the sequence is MKWLLWLGYIFSFGLLYLWIV. Residues 42-117 enclose the PTS EIIB type-1 domain; it reads PFKVKDFVSA…ELKKKIEDEQ (76 aa).

The protein resides in the membrane. Its function is as follows. The phosphoenolpyruvate-dependent sugar phosphotransferase system (PTS), a major carbohydrate active -transport system, catalyzes the phosphorylation of incoming sugar substrates concomitant with their translocation across the cell membrane. The chain is Putative phosphotransferase enzyme IIB component MG129 from Mycoplasma genitalium (strain ATCC 33530 / DSM 19775 / NCTC 10195 / G37) (Mycoplasmoides genitalium).